An 842-amino-acid polypeptide reads, in one-letter code: CRM-domain containing factor CFM3, chloroplastic/mitochondrial (842 aa).

The transit peptide at 1 to 82 directs the protein to the chloroplast and mitochondrion; sequence MAMASSPACH…RSSGRSTMSL (82 aa). Disordered stretches follow at residues 49 to 80, 141 to 160, and 254 to 290; these read AALDLRPEPSPSSDSDDEDAVGASRSSGRSTM, RFPWERPMPPPEAAPRSARS, and VDYDEPEPTKKSKKNSQSLAMDFPIKGSSNPSLLPTE. In terms of domain architecture, CRM 1 spans 167-263; the sequence is LTLPAAELRR…VDYDEPEPTK (97 aa). The span at 280–290 shows a compositional bias: polar residues; the sequence is GSSNPSLLPTE. CRM domains are found at residues 371–468 and 582–682; these read PSLS…ELAE and ETIT…SSLR. Residues 703-732 are a coiled coil; sequence QALSRHFAKLNRKVERLKAELVQMEDVKEQ. A disordered region spans residues 768–842; the sequence is VAGATADDDG…DRRNHDVNEY (75 aa). Over residues 786–812 the composition is skewed to acidic residues; it reads DEADYPDSDDEAGDCSEDEGEDDEDEA. Positions 831–842 are enriched in basic and acidic residues; sequence DTDRRNHDVNEY.

Interacts with RNA. Part of large ribonucleo-protein particles that contain CAF1 and/or CAF2, and RNC1.

Its subcellular location is the plastid. It is found in the chloroplast stroma. The protein resides in the mitochondrion. Functionally, binds specific group II introns in chloroplasts and facilitates their splicing. Acts on subgroup IIB introns. The substrates of the subgroup IIB also require the CRM domain proteins CAF1 or CAF2, with a simultaneous binding of CFM3 and CAF1 or CAF2. May influence the biogenesis of the mitochondrial small ribosomal subunit. The polypeptide is CRM-domain containing factor CFM3, chloroplastic/mitochondrial (Zea mays (Maize)).